The following is a 688-amino-acid chain: Homoaconitase, mitochondrial (688 aa).

The transit peptide at 1-19 (MALLYLSTRSSLKKTGARC) directs the protein to the mitochondrion. [4Fe-4S] cluster-binding residues include Cys-346, Cys-406, and Cys-409.

This sequence belongs to the aconitase/IPM isomerase family. Requires [4Fe-4S] cluster as cofactor.

The protein localises to the mitochondrion. It catalyses the reaction (2R,3S)-homoisocitrate = cis-homoaconitate + H2O. It functions in the pathway amino-acid biosynthesis; L-lysine biosynthesis via AAA pathway; L-alpha-aminoadipate from 2-oxoglutarate: step 3/5. Its function is as follows. Catalyzes the reversible hydration of cis-homoaconitate to (2R,3S)-homoisocitrate, a step in the alpha-aminoadipate pathway for lysine biosynthesis. The polypeptide is Homoaconitase, mitochondrial (LYS4) (Debaryomyces hansenii (strain ATCC 36239 / CBS 767 / BCRC 21394 / JCM 1990 / NBRC 0083 / IGC 2968) (Yeast)).